A 239-amino-acid polypeptide reads, in one-letter code: MTEVKVAVTIAPEQELSQSTIDDLIQFQDSIDIIELRIDQWTNLNEIAIEKVVEDLQSLKLNKKLLVTYRTSNQGGLGDFGEDDYIQILRKIANCQNIDMLDIEFDQTRSLNILQELIELAHKNQVQVVLSHHNFKETPKLEALKHLFYKMQQLESDYIKVAVMPHGKQDVLNLLNAMSDTADVVSQHVVGIAMSKIGLISRTAQGVFGGSISYGCLDTPKAPGQIHVSTLKKQLSMYE.

3-dehydroquinate-binding positions include 35 to 37 and arginine 70; that span reads ELR. Residue histidine 133 is the Proton donor/acceptor of the active site. Residue lysine 160 is the Schiff-base intermediate with substrate of the active site. Positions 202 and 225 each coordinate 3-dehydroquinate.

Belongs to the type-I 3-dehydroquinase family. As to quaternary structure, homodimer.

It carries out the reaction 3-dehydroquinate = 3-dehydroshikimate + H2O. It functions in the pathway metabolic intermediate biosynthesis; chorismate biosynthesis; chorismate from D-erythrose 4-phosphate and phosphoenolpyruvate: step 3/7. Its function is as follows. Involved in the third step of the chorismate pathway, which leads to the biosynthesis of aromatic amino acids. Catalyzes the cis-dehydration of 3-dehydroquinate (DHQ) and introduces the first double bond of the aromatic ring to yield 3-dehydroshikimate. This chain is 3-dehydroquinate dehydratase, found in Staphylococcus saprophyticus subsp. saprophyticus (strain ATCC 15305 / DSM 20229 / NCIMB 8711 / NCTC 7292 / S-41).